The sequence spans 170 residues: Cathelicidin antimicrobial peptide (170 aa).

A signal peptide spans 1-30; it reads MKTQRDGPSLGRWSLVLLLLGLVMPLAIVA. A propeptide spans 31–131 (cathelin-like domain (CLD)); it reads QVLSYQEAVL…DISCDKDNRR (101 aa). Intrachain disulfides connect cysteine 86–cysteine 97 and cysteine 108–cysteine 125. An active core region spans residues 150 to 162; sequence LKKIGQKIKDFLG.

The protein belongs to the cathelicidin family. Monomer, homodimer or homotrimer (in vitro). Oligomerizes as tetra- or hexamer in solution (in vitro). Proteolytically cleaved by proteinase PRTN3 into antibacterial peptide LL-37. Proteolytically cleaved by cathepsin CTSG and neutrophil elastase ELANE. Post-translationally, resistant to proteolytic degradation in solution, and when bound to both zwitterionic (mimicking mammalian membranes) and negatively charged membranes (mimicking bacterial membranes). In terms of processing, after secretion onto the skin surface, the CAMP gene product is processed by a serine protease-dependent mechanism into multiple novel antimicrobial peptides distinct from and shorter than cathelicidin LL-37. These peptides show enhanced antimicrobial action, acquiring the ability to kill skin pathogens such as S.aureus, E.coli and C.albicans. These peptides have lost the ability to stimulate CXCL8/IL8 release from keratinocytes. The peptides act synergistically, killing bacteria at lower concentrations when present together, and maintain activity at increased salt condition.

The protein localises to the secreted. It is found in the vesicle. Functionally, antimicrobial protein that is an integral component of the innate immune system. Binds to bacterial lipopolysaccharides (LPS). Acts via neutrophil N-formyl peptide receptors to enhance the release of CXCL2. Postsecretory processing generates multiple cathelicidin antimicrobial peptides with various lengths which act as a topical antimicrobial defense in sweat on skin. The unprocessed precursor form, cathelicidin antimicrobial peptide, inhibits the growth of Gram-negative E.coli and E.aerogenes with efficiencies comparable to that of the mature peptide LL-37 (in vitro). Its function is as follows. Antimicrobial peptide that is an integral component of the innate immune system. Binds to bacterial lipopolysaccharides (LPS). Causes membrane permeabilization by forming transmembrane pores (in vitro). Causes lysis of E.coli. Exhibits antimicrobial activity against Gram-negative bacteria such as P.aeruginosa, S.typhimurium, E.aerogenes, E.coli and P.syringae, Gram-positive bacteria such as L.monocytogenes, S.epidermidis, S.pyogenes and S.aureus, as well as vancomycin-resistant enterococci (in vitro). Exhibits antimicrobial activity against methicillin-resistant S.aureus, P.mirabilis, and C.albicans in low-salt media, but not in media containing 100 mM NaCl (in vitro). Forms chiral supramolecular assemblies with quinolone signal (PQS) molecules of P.aeruginosa, which may lead to interference of bacterial quorum signaling and perturbance of bacterial biofilm formation. May form supramolecular fiber-like assemblies on bacterial membranes. Induces cytokine and chemokine producation as well as TNF/TNFA and CSF2/GMCSF production in normal human keratinocytes. Exhibits hemolytic activity against red blood cells. Exhibits antimicrobial activity against E.coli and B.megaterium (in vitro). The polypeptide is Cathelicidin antimicrobial peptide (Chlorocebus aethiops (Green monkey)).